A 275-amino-acid chain; its full sequence is ORF2/4 protein (275 aa).

Disordered regions lie at residues 44–103 (LGRP…DGEL) and 116–207 (ADPQ…PPPT). Over residues 79 to 98 (GTGGDAAGGEAGGSRGAGDG) the composition is skewed to gly residues. Residues 129–139 (GQRKNARKRLR) show a composition bias toward basic residues. The span at 170-188 (TRTTSPAAPAAATPQSPAR) shows a compositional bias: low complexity.

In Torque teno virus (isolate Human/Finland/Hel32/2002) (TTV), this protein is ORF2/4 protein.